The primary structure comprises 188 residues: MLQLHPSDIKDIILQGGVIAYPTEAVYGLGCDPDNDTAIQKLLAVKQRPWQKGLILVASDFQQLLAYVDESQLTAEQLEFAFSKWPGPFTFVMPIKAHVSKYLCGEFDSIAVRVSAHAGVQALCRALNKPLVSTSANLAGEDPALTAAEILADFTGKIDALVLGELGEQRQPSTIIDARSGKILRNGQ.

Residues 3 to 188 form the YrdC-like domain; the sequence is QLHPSDIKDI…RSGKILRNGQ (186 aa).

Belongs to the SUA5 family. TsaC subfamily.

Its subcellular location is the cytoplasm. It catalyses the reaction L-threonine + hydrogencarbonate + ATP = L-threonylcarbamoyladenylate + diphosphate + H2O. Functionally, required for the formation of a threonylcarbamoyl group on adenosine at position 37 (t(6)A37) in tRNAs that read codons beginning with adenine. Catalyzes the conversion of L-threonine, HCO(3)(-)/CO(2) and ATP to give threonylcarbamoyl-AMP (TC-AMP) as the acyladenylate intermediate, with the release of diphosphate. This is Threonylcarbamoyl-AMP synthase from Shewanella baltica (strain OS155 / ATCC BAA-1091).